The following is a 330-amino-acid chain: Aspartate--ammonia ligase (330 aa).

It belongs to the class-II aminoacyl-tRNA synthetase family. AsnA subfamily.

Its subcellular location is the cytoplasm. The enzyme catalyses L-aspartate + NH4(+) + ATP = L-asparagine + AMP + diphosphate + H(+). It participates in amino-acid biosynthesis; L-asparagine biosynthesis; L-asparagine from L-aspartate (ammonia route): step 1/1. This Escherichia coli O139:H28 (strain E24377A / ETEC) protein is Aspartate--ammonia ligase.